Here is a 638-residue protein sequence, read N- to C-terminus: Plasma kallikrein (638 aa).

The first 19 residues, 1–19 (MILFKQATYFISLFATVSC), serve as a signal peptide directing secretion. Apple domains lie at 21-104 (CLTQ…LKQC), 111-194 (CHRD…LKPC), 201-284 (CHMN…LLTC), and 292-375 (CHSK…LRLC). 18 disulfide bridges follow: cysteine 21–cysteine 104, cysteine 47–cysteine 77, cysteine 51–cysteine 57, cysteine 111–cysteine 194, cysteine 137–cysteine 166, cysteine 141–cysteine 147, cysteine 201–cysteine 284, cysteine 227–cysteine 256, cysteine 231–cysteine 237, cysteine 292–cysteine 375, cysteine 318–cysteine 347, cysteine 322–cysteine 328, cysteine 340–cysteine 345, cysteine 383–cysteine 503, cysteine 419–cysteine 435, cysteine 517–cysteine 584, cysteine 548–cysteine 563, and cysteine 574–cysteine 602. N-linked (GlcNAc...) asparagine glycosylation occurs at asparagine 127. N-linked (GlcNAc...) asparagine glycosylation is present at asparagine 308. The Peptidase S1 domain occupies 391–626 (IVGGTNSSWG…YMDWILEKTQ (236 aa)). The N-linked (GlcNAc...) asparagine glycan is linked to asparagine 396. Catalysis depends on histidine 434, which acts as the Charge relay system. N-linked (GlcNAc...) asparagine glycosylation is present at asparagine 453. Aspartate 483 functions as the Charge relay system in the catalytic mechanism. N-linked (GlcNAc...) asparagine glycosylation occurs at asparagine 494. Serine 578 serves as the catalytic Charge relay system.

Belongs to the peptidase S1 family. Plasma kallikrein subfamily. Forms a heterodimer with SERPINA5. The zymogen is activated by factor XIIa, which cleaves the molecule into a light chain, which contains the active site, and a heavy chain, which associates with HMW kininogen. These chains are linked by one or more disulfide bonds. Interacts with iripin-3, a serine protease inhibitor from Ixodes ricinus saliva. Interacts with iripin-1, a serine protease inhibitor from Ixodes ricinus saliva. In terms of tissue distribution, found in plasma (at protein level).

It localises to the secreted. It carries out the reaction Cleaves selectively Arg-|-Xaa and Lys-|-Xaa bonds, including Lys-|-Arg and Arg-|-Ser bonds in (human) kininogen to release bradykinin.. Its activity is regulated as follows. Inhibited by SERPINA5. In terms of biological role, participates in the surface-dependent activation of blood coagulation. Activates, in a reciprocal reaction, coagulation factor XII/F12 after binding to negatively charged surfaces. Releases bradykinin from HMW kininogen and may also play a role in the renin-angiotensin system by converting prorenin into renin. The polypeptide is Plasma kallikrein (KLKB1) (Homo sapiens (Human)).